Here is a 167-residue protein sequence, read N- to C-terminus: S-ribosylhomocysteine lyase (167 aa).

Fe cation-binding residues include H54, H58, and C128.

It belongs to the LuxS family. Homodimer. Fe cation serves as cofactor.

It carries out the reaction S-(5-deoxy-D-ribos-5-yl)-L-homocysteine = (S)-4,5-dihydroxypentane-2,3-dione + L-homocysteine. In terms of biological role, involved in the synthesis of autoinducer 2 (AI-2) which is secreted by bacteria and is used to communicate both the cell density and the metabolic potential of the environment. The regulation of gene expression in response to changes in cell density is called quorum sensing. Catalyzes the transformation of S-ribosylhomocysteine (RHC) to homocysteine (HC) and 4,5-dihydroxy-2,3-pentadione (DPD). The polypeptide is S-ribosylhomocysteine lyase (Haemophilus influenzae (strain PittEE)).